The chain runs to 31 residues: MPTITSYFGFLLAASTITSALLIGLSKIRLI.

Residues 4–26 (ITSYFGFLLAASTITSALLIGLS) traverse the membrane as a helical segment.

Belongs to the PetL family. In terms of assembly, the 4 large subunits of the cytochrome b6-f complex are cytochrome b6, subunit IV (17 kDa polypeptide, PetD), cytochrome f and the Rieske protein, while the 4 small subunits are PetG, PetL, PetM and PetN. The complex functions as a dimer.

The protein resides in the plastid. Its subcellular location is the chloroplast thylakoid membrane. In terms of biological role, component of the cytochrome b6-f complex, which mediates electron transfer between photosystem II (PSII) and photosystem I (PSI), cyclic electron flow around PSI, and state transitions. PetL is important for photoautotrophic growth as well as for electron transfer efficiency and stability of the cytochrome b6-f complex. The chain is Cytochrome b6-f complex subunit 6 from Chloranthus spicatus (Chulantree).